The following is a 461-amino-acid chain: Argininosuccinate lyase (461 aa).

This sequence belongs to the lyase 1 family. Argininosuccinate lyase subfamily.

It localises to the cytoplasm. The catalysed reaction is 2-(N(omega)-L-arginino)succinate = fumarate + L-arginine. The protein operates within amino-acid biosynthesis; L-arginine biosynthesis; L-arginine from L-ornithine and carbamoyl phosphate: step 3/3. The chain is Argininosuccinate lyase from Clostridium beijerinckii (strain ATCC 51743 / NCIMB 8052) (Clostridium acetobutylicum).